A 486-amino-acid polypeptide reads, in one-letter code: MFAHTLFRKRCAIWLLAIGIFLMLGSCAEKPSELERIKEEGVLRVITRNSPSTYFQDRNGEAGFEYELVKRFASTLGVELQIETADNIDDIFSRLNRPGGPALAAAGLVASEGRQELARFTRSYLDVTTQVVYHSGQRRPTSPKDLIGKRILVLKGSSQAEKLASLQVEYPELRYDESDAVEVVDLLRMVDEGQIDLTLVESNEMSMNQVYFSNIRAGFDVGEQNSLAWVVAKGEDDSLLKAADAFLEQAQQNGTLQRLRERYYGHVDVLGYVGAYAFAKHLQQRLPRYEKAFRETAKEHGIDWRLLAAIGYQESHWQPEATSKTGVRGLMMLTLRTANAMGVTNRLDPVQSIQGGGKYLVQVHASLPESIEEPDRTWFALAAYNVGGGHLEDARKLAEAEGLDPNKWLDVKQMLPRLSQKQWYSKTRYGYARGGEPVHFVANIRRYYDILTWVTQPQMEGQQLAKSELHIPGINSTDLMEELPPL.

Positions 1 to 28 are cleaved as a signal peptide; sequence MFAHTLFRKRCAIWLLAIGIFLMLGSCA. The interval 29 to 267 is non-LT domain; it reads EKPSELERIK…RLRERYYGHV (239 aa). The LT domain stretch occupies residues 268 to 486; sequence DVLGYVGAYA…TDLMEELPPL (219 aa). Glu314 is an active-site residue.

It in the N-terminal section; belongs to the bacterial solute-binding protein 3 family. This sequence in the C-terminal section; belongs to the transglycosylase Slt family.

The protein resides in the cell outer membrane. It catalyses the reaction Exolytic cleavage of the (1-&gt;4)-beta-glycosidic linkage between N-acetylmuramic acid (MurNAc) and N-acetylglucosamine (GlcNAc) residues in peptidoglycan, from either the reducing or the non-reducing ends of the peptidoglycan chains, with concomitant formation of a 1,6-anhydrobond in the MurNAc residue.. In terms of biological role, murein-degrading enzyme that degrades murein glycan strands and insoluble, high-molecular weight murein sacculi, with the concomitant formation of a 1,6-anhydromuramoyl product. Lytic transglycosylases (LTs) play an integral role in the metabolism of the peptidoglycan (PG) sacculus. Their lytic action creates space within the PG sacculus to allow for its expansion as well as for the insertion of various structures such as secretion systems and flagella. The polypeptide is Membrane-bound lytic murein transglycosylase F (Stutzerimonas stutzeri (strain A1501) (Pseudomonas stutzeri)).